A 205-amino-acid chain; its full sequence is Thymidylate kinase (205 aa).

13–20 is an ATP binding site; that stretch reads GIDGSGKS.

This sequence belongs to the thymidylate kinase family.

It catalyses the reaction dTMP + ATP = dTDP + ADP. Phosphorylation of dTMP to form dTDP in both de novo and salvage pathways of dTTP synthesis. The protein is Thymidylate kinase of Leptospira borgpetersenii serovar Hardjo-bovis (strain L550).